The primary structure comprises 568 residues: Potassium-transporting ATPase potassium-binding subunit (568 aa).

The next 10 helical transmembrane spans lie at 3–23, 68–88, 133–153, 180–200, 256–276, 281–301, 375–395, 421–441, 497–517, and 535–555; these read TEVL…YPLG, LLVV…TQGV, FVIM…MAGI, LLPL…PMGF, VECW…GFYL, LGYS…CINV, FGGV…AVFI, IVAL…AYLF, IVLI…AGIL, and VTFG…SFFP.

This sequence belongs to the KdpA family. In terms of assembly, the system is composed of three essential subunits: KdpA, KdpB and KdpC.

Its subcellular location is the cell inner membrane. Its function is as follows. Part of the high-affinity ATP-driven potassium transport (or Kdp) system, which catalyzes the hydrolysis of ATP coupled with the electrogenic transport of potassium into the cytoplasm. This subunit binds the periplasmic potassium ions and delivers the ions to the membrane domain of KdpB through an intramembrane tunnel. The chain is Potassium-transporting ATPase potassium-binding subunit from Phocaeicola vulgatus (strain ATCC 8482 / DSM 1447 / JCM 5826 / CCUG 4940 / NBRC 14291 / NCTC 11154) (Bacteroides vulgatus).